Here is a 115-residue protein sequence, read N- to C-terminus: ComG operon protein 5 (115 aa).

A propeptide spans 1 to 7 (MWRENKG) (leader sequence). Phenylalanine 8 bears the N-methylphenylalanine mark. A helical transmembrane segment spans residues 13-31 (TMSALSLWLFVLLTVVPLW).

In terms of processing, processing of ComGE in competent cells requires ComC.

Its subcellular location is the cell membrane. The protein localises to the cell surface. Required for transformation and DNA binding. The chain is ComG operon protein 5 (comGE) from Bacillus subtilis (strain 168).